Consider the following 259-residue polypeptide: BTB/POZ domain-containing protein KCTD4 (259 aa).

The interval 1–25 is disordered; the sequence is MERKINRREKEKEYEGKHNSLEDTD. One can recognise a BTB domain in the interval 33-134; sequence TLMTLNVGGY…EVKSRWEKEQ (102 aa).

This is BTB/POZ domain-containing protein KCTD4 (KCTD4) from Homo sapiens (Human).